The primary structure comprises 222 residues: Non-structural protein V (222 aa).

Positions 61–107 are disordered; that stretch reads ESTNHQKGSVGGGAKPKKPRPKIAIVPADDKTVPGKPIPNPLLGLDS. Residues His-171, Cys-190, Cys-194, Cys-206, Cys-208, Cys-211, Cys-215, and Cys-218 each contribute to the Zn(2+) site.

It belongs to the paramyxoviruses V protein family. In terms of assembly, interacts with host DDB1, STAT2 and IFIH1/MDA5. Interacts with host RIGI regulatory protein (via CARDs domain) and host TRIM25 (via SPRY domain); these interactions prevent TRIM25-mediated ubiquitination of RIG-I and disrupts downstream RIG-I signaling.

It is found in the host cytoplasm. Its function is as follows. Plays an essential role in the inhibition of host immune response. Prevents the establishment of cellular antiviral state by blocking interferon-alpha/beta (IFN-alpha/beta) production and signaling pathway. Interacts with host IFIH1/MDA5 and DHX58/LGP2 to inhibit the transduction pathway involved in the activation of IFN-beta promoter, thus protecting the virus against cell antiviral state. Efficiently blocks type I IFN signaling following infection by behaving as a substrate receptor for CUL4-DDB1 E3 ligase complex and targeting host STAT1 for proteasomal degradation. Blocks the type I interferon signaling pathway by disrupting the RIG-I signaling pathway. The polypeptide is Non-structural protein V (P/V) (Parainfluenza virus 5 (strain W3) (PIV5)).